The primary structure comprises 213 residues: Andrastin A biosynthesis cluster protein B (213 aa).

Part of the gene cluster that mediates the biosynthesis of andrastins, meroterpenoid compounds that exhibit inhibitory activity against ras farnesyltransferase, suggesting that they could be promising leads for antitumor agents. The first step of the pathway is the synthesis of 3,5-dimethylorsellinic acid (DMOA) by the polyketide synthase adrD via condensation of one acetyl-CoA starter unit with 3 malonyl-CoA units and 2 methylations. DMAO is then converted to farnesyl-DMAO by the prenyltransferase adrG. The methyltransferase adrK catalyzes the methylation of the carboxyl group of farnesyl-DMAO to farnesyl-DMAO methyl ester which is further converted to epoxyfarnesyl-DMAO methyl ester by the FAD-dependent monooxygenase adrH. The terpene cyclase adrI then catalyzes the carbon skeletal rearrangement to generate the andrastin E, the first compound in the pathway having the andrastin scaffold, with the tetracyclic ring system. The post-cyclization tailoring enzymes adrF, adrE, adrJ, and adrA, are involved in the conversion of andrastin E into andrastin A. The short chain dehydrogenase adrF is responsible for the oxidation of the C-3 a hydroxyl group of andrastin E to yield the corresponding ketone, andrastin D. The ketoreductase adrE stereoselectively reduces the carbonyl moiety to reverse the stereochemistry of the C-3 position to yield andrastin F. The acetyltransferase adrJ is the acetyltransferase that attaches the acetyl group to the C-3 hydroxyl group of andrastin F to yield andrastin C. Finally, the cytochrome P450 monooxygenase adrA catalyzes two sequential oxidation reactions of the C-23 methyl group, to generate the corresponding alcohol andrastin B, and aldehyde andrastin A. The sequence is that of Andrastin A biosynthesis cluster protein B from Penicillium rubens (strain ATCC 28089 / DSM 1075 / NRRL 1951 / Wisconsin 54-1255) (Penicillium chrysogenum).